A 338-amino-acid chain; its full sequence is 3-isopropylmalate dehydrogenase (338 aa).

Substrate contacts are provided by arginine 88, arginine 98, arginine 122, and aspartate 212. Residues aspartate 212, aspartate 236, and aspartate 240 each coordinate Mg(2+). Glycine 272–aspartate 284 provides a ligand contact to NAD(+).

It belongs to the isocitrate and isopropylmalate dehydrogenases family. LeuB type 2 subfamily. As to quaternary structure, homodimer. Mg(2+) is required as a cofactor. The cofactor is Mn(2+).

It localises to the cytoplasm. It carries out the reaction (2R,3S)-3-isopropylmalate + NAD(+) = 4-methyl-2-oxopentanoate + CO2 + NADH. The protein operates within amino-acid biosynthesis; L-leucine biosynthesis; L-leucine from 3-methyl-2-oxobutanoate: step 3/4. Functionally, catalyzes the oxidation of 3-carboxy-2-hydroxy-4-methylpentanoate (3-isopropylmalate) to 3-carboxy-4-methyl-2-oxopentanoate. The product decarboxylates to 4-methyl-2 oxopentanoate. This chain is 3-isopropylmalate dehydrogenase, found in Corynebacterium jeikeium (strain K411).